The sequence spans 133 residues: Small ribosomal subunit protein uS11 (133 aa).

Belongs to the universal ribosomal protein uS11 family. As to quaternary structure, part of the 30S ribosomal subunit. Interacts with proteins S7 and S18. Binds to IF-3.

Functionally, located on the platform of the 30S subunit, it bridges several disparate RNA helices of the 16S rRNA. Forms part of the Shine-Dalgarno cleft in the 70S ribosome. In Christiangramia forsetii (strain DSM 17595 / CGMCC 1.15422 / KT0803) (Gramella forsetii), this protein is Small ribosomal subunit protein uS11.